The following is a 303-amino-acid chain: 1D-myo-inositol 2-acetamido-2-deoxy-alpha-D-glucopyranoside deacetylase (303 aa).

Residues histidine 15, aspartate 18, and histidine 157 each contribute to the Zn(2+) site.

This sequence belongs to the MshB deacetylase family. Requires Zn(2+) as cofactor.

The catalysed reaction is 1D-myo-inositol 2-acetamido-2-deoxy-alpha-D-glucopyranoside + H2O = 1D-myo-inositol 2-amino-2-deoxy-alpha-D-glucopyranoside + acetate. In terms of biological role, catalyzes the deacetylation of 1D-myo-inositol 2-acetamido-2-deoxy-alpha-D-glucopyranoside (GlcNAc-Ins) in the mycothiol biosynthesis pathway. This chain is 1D-myo-inositol 2-acetamido-2-deoxy-alpha-D-glucopyranoside deacetylase, found in Kribbella flavida (strain DSM 17836 / JCM 10339 / NBRC 14399).